The sequence spans 2329 residues: Pre-mRNA-splicing factor 8 homolog (2329 aa).

Residues 1-53 (MANYGGHPQTEPHAIPDSILEEKSRKWKQLQGKRYSEKKKFGMSDTQKEEMPP) are disordered. Residues 34 to 53 (RYSEKKKFGMSDTQKEEMPP) show a composition bias toward basic and acidic residues. The interval 804–1295 (TTVHWLESRR…KIQTRIKIGL (492 aa)) is reverse transcriptase homology domain. The tract at residues 1296 to 1570 (NSKMPSRFPP…TLKISLIQIF (275 aa)) is linker. Residues 1506-1519 (MKFKKLTNAQRSGL) are important for branch point selection. Residues 1574 to 1745 (LWQKIHESVV…LRERIRKGLQ (172 aa)) are restriction endonuclease homology domain. Residues 1760 to 2013 (NYGELFSNQI…ILGMEISAPS (254 aa)) form an RNase H homology domain region. Positions 2096 to 2227 (TYILPKNILK…LTAYKLTPSG (132 aa)) constitute an MPN domain.

Part of the U5 snRNP complex and of the U4/U6-U5 tri-snRNP complex.

It is found in the nucleus. Its function is as follows. Functions as a scaffold that mediates the ordered assembly of spliceosomal proteins and snRNAs. Required for the assembly of the U4/U6-U5 tri-snRNP complex. Functions as a scaffold that positions spliceosomal U2, U5 and U6 snRNAs at splice sites on pre-mRNA substrates, so that splicing can occur. Interacts with both the 5' and the 3' splice site. The polypeptide is Pre-mRNA-splicing factor 8 homolog (prp-8) (Caenorhabditis elegans).